The primary structure comprises 398 residues: MTQSVCILGVTGSIGQSTLKVLAQHPDKYSIYAITAHSRIQELVEICKQFKPKRVVVPDEHIDQLRQLLLQAGLADIDILSGTTGLVSVAQDEAVDVVMAAIVGAAGLLPTLAAVKAGKRVLLANKEALVMSGNIMMQAARDHQALLLPVDSEHNAIFQSLPSNYLTLENTGQPQLGVSRILLTASGGPFLDYPLEQLSEVTPQQACKHPNWSMGQKISVDSATLMNKGLELIEACHLFSISEHFVTVVVHPQSIIHSMVQYIDGSTLAQMGNPDMCTPIAHALAWPDRLQTHVPALDLFTHTHLDFREPDTNKFPALNLARQAMRAGGLSPCILNAANEIAVDAFLKLQIKFTVIPEVIEHVLNHVQNDTAVNIEQVLETDMIARQIAHQYVNQIRG.

NADPH-binding residues include Thr11, Gly12, Ser13, Ile14, and Asn125. Lys126 serves as a coordination point for 1-deoxy-D-xylulose 5-phosphate. Glu127 is an NADPH binding site. Asp151 is a binding site for Mn(2+). Positions 152, 153, 186, and 209 each coordinate 1-deoxy-D-xylulose 5-phosphate. Glu153 is a Mn(2+) binding site. Gly215 is an NADPH binding site. Positions 222, 227, 228, and 231 each coordinate 1-deoxy-D-xylulose 5-phosphate. Mn(2+) is bound at residue Glu231.

It belongs to the DXR family. It depends on Mg(2+) as a cofactor. The cofactor is Mn(2+).

The enzyme catalyses 2-C-methyl-D-erythritol 4-phosphate + NADP(+) = 1-deoxy-D-xylulose 5-phosphate + NADPH + H(+). The protein operates within isoprenoid biosynthesis; isopentenyl diphosphate biosynthesis via DXP pathway; isopentenyl diphosphate from 1-deoxy-D-xylulose 5-phosphate: step 1/6. In terms of biological role, catalyzes the NADPH-dependent rearrangement and reduction of 1-deoxy-D-xylulose-5-phosphate (DXP) to 2-C-methyl-D-erythritol 4-phosphate (MEP). The protein is 1-deoxy-D-xylulose 5-phosphate reductoisomerase of Acinetobacter baylyi (strain ATCC 33305 / BD413 / ADP1).